Consider the following 514-residue polypeptide: Maturase K (514 aa).

It belongs to the intron maturase 2 family. MatK subfamily.

The protein localises to the plastid. Its subcellular location is the chloroplast. Functionally, usually encoded in the trnK tRNA gene intron. Probably assists in splicing its own and other chloroplast group II introns. This is Maturase K from Lepidozamia peroffskyana (Peroffsky's lepidozamia).